The primary structure comprises 526 residues: MGSSKSKPKDPSQRRRSLEPPDSTHHGGFPASQTPNKTAAPDTHRTPSRSFGTVATEPKLFGGFNTSDTVTSPQRAGALAGGVTTFVALYDYESWIETDLSFKKGERLQIVNNTEGNWWLAHSLTTGQTGYIPSNYVAPSDSIQAEEWYFGKITRRESERLLLNPENPRGTFLVRESETTKGAYCLSVSDFDNAKGLNVKHYKIRKLDSGGFYITSRTQFSSLQQLVAYYSKHADGLCHRLTNVCPTSKPQTQGLAKDAWEIPRESLRLEVKLGQGCFGEVWMGTWNGTTRVAIKTLKPGTMSPEAFLQEAQVMKKLRHEKLVQLYAVVSEEPIYIVIEYMSKGSLLDFLKGEMGKYLRLPQLVDMAAQIASGMAYVERMNYVHRDLRAANILVGENLVCKVADFGLARLIEDNEYTARQGAKFPIKWTAPEAALYGRFTIKSDVWSFGILLTELTTKGRVPYPGMGNGEVLDRVERGYRMPCPPECPESLHDLMCQCWRRDPEERPTFEYLQAQLLPACVLEVAE.

A disordered region spans residues Met1–Glu57. Residue Gly2 is the site of N-myristoyl glycine; by host attachment. A compositionally biased stretch (basic and acidic residues) spans Lys7 to His25. The SH3 domain maps to Gly81 to Ser142. Residues Trp148 to Cys245 form the SH2 domain. A Protein kinase domain is found at Leu267–Leu517. ATP is bound by residues Leu273–Val281 and Lys295. The active-site Proton acceptor is Asp386. Phosphotyrosine; by autocatalysis is present on Tyr416.

This sequence belongs to the protein kinase superfamily. Tyr protein kinase family. SRC subfamily. As to quaternary structure, homodimer. Post-translationally, the phosphorylated form is termed pp60v-src.

The catalysed reaction is L-tyrosyl-[protein] + ATP = O-phospho-L-tyrosyl-[protein] + ADP + H(+). In terms of biological role, this phosphoprotein, required for both the initiation and the maintenance of neoplastic transformation, is a protein kinase that catalyzes the phosphorylation of tyrosine residues in vitro. Causes mitotic slippage in addition to cytokinesis failure in the host cell. Phosphorylates and attenuates the activity of host CDK1, possibly causing the mitotic slippage. This chain is Tyrosine-protein kinase transforming protein Src (V-SRC), found in Rous sarcoma virus subgroup A (strain Schmidt-Ruppin) (RSV-SR-A).